A 309-amino-acid polypeptide reads, in one-letter code: Glutaminase (309 aa).

Substrate contacts are provided by Ser-65, Asn-117, Glu-162, Asn-169, Tyr-193, Tyr-245, and Val-263.

The protein belongs to the glutaminase family. As to quaternary structure, homotetramer.

It carries out the reaction L-glutamine + H2O = L-glutamate + NH4(+). In Clostridioides difficile (strain 630) (Peptoclostridium difficile), this protein is Glutaminase.